A 428-amino-acid chain; its full sequence is tRNA modification GTPase MnmE (428 aa).

(6S)-5-formyl-5,6,7,8-tetrahydrofolate-binding residues include arginine 20, glutamate 76, and arginine 116. The TrmE-type G domain maps to 212-351 (GFEVAIVGAP…LVAAIGERLL (140 aa)). Residue asparagine 222 participates in K(+) binding. GTP contacts are provided by residues 222-227 (NAGKST), 241-247 (SEIAGTT), and 266-269 (DTAG). Serine 226 provides a ligand contact to Mg(2+). K(+) contacts are provided by serine 241, isoleucine 243, and threonine 246. Threonine 247 is a Mg(2+) binding site. Lysine 428 serves as a coordination point for (6S)-5-formyl-5,6,7,8-tetrahydrofolate.

It belongs to the TRAFAC class TrmE-Era-EngA-EngB-Septin-like GTPase superfamily. TrmE GTPase family. In terms of assembly, homodimer. Heterotetramer of two MnmE and two MnmG subunits. It depends on K(+) as a cofactor.

Its subcellular location is the cytoplasm. Its function is as follows. Exhibits a very high intrinsic GTPase hydrolysis rate. Involved in the addition of a carboxymethylaminomethyl (cmnm) group at the wobble position (U34) of certain tRNAs, forming tRNA-cmnm(5)s(2)U34. The chain is tRNA modification GTPase MnmE from Cereibacter sphaeroides (strain ATCC 17029 / ATH 2.4.9) (Rhodobacter sphaeroides).